We begin with the raw amino-acid sequence, 319 residues long: Probable cell division protein WhiA (319 aa).

The segment at residues serine 277 to lysine 310 is a DNA-binding region (H-T-H motif).

It belongs to the WhiA family.

Involved in cell division and chromosome segregation. This Tropheryma whipplei (strain Twist) (Whipple's bacillus) protein is Probable cell division protein WhiA.